The chain runs to 334 residues: Beta-glucanase (334 aa).

A signal peptide spans 1-27; the sequence is MKNRVISLLMASLLLVLSVIVAPFYKA. The GH16 domain occupies 28 to 248; that stretch reads EAATVVNTPF…YVKYYPNGVP (221 aa). The active-site Nucleophile is E136. Residue E140 is the Proton donor of the active site. Residues 246–265 form a disordered region; it reads GVPQDNPTPTPTIAPSTPTN. The Dockerin domain occupies 267-334; the sequence is NLPLKGDVNG…RYLIRAIPSL (68 aa).

It belongs to the glycosyl hydrolase 16 family.

The catalysed reaction is Hydrolysis of (1-&gt;4)-beta-D-glucosidic linkages in beta-D-glucans containing (1-&gt;3)- and (1-&gt;4)-bonds.. The chain is Beta-glucanase (licB) from Acetivibrio thermocellus (Hungateiclostridium thermocellum).